Here is a 213-residue protein sequence, read N- to C-terminus: MDARILQDNDDTSLPVNQASVTRIHKKPGKAEAEAAVRTLLLWAGEDPDREGLLETPKRVAKAYQELFGGYSESPEEVLGTTFEEVAGYDDMVLVKDISFFSHCEHHMVPIIGKAHVAYLPEGRVVGLSKIARVVDIFARRLQTQESITAQIADSIQRILKPRGVAVMIEAEHMCMAMRSIRKQGSSTITTTFTGDFKEKADQQVRFMTLIRT.

Zn(2+) is bound by residues Cys104, His107, and Cys175.

Belongs to the GTP cyclohydrolase I family. Toroid-shaped homodecamer, composed of two pentamers of five dimers.

The enzyme catalyses GTP + H2O = 7,8-dihydroneopterin 3'-triphosphate + formate + H(+). The protein operates within cofactor biosynthesis; 7,8-dihydroneopterin triphosphate biosynthesis; 7,8-dihydroneopterin triphosphate from GTP: step 1/1. This is GTP cyclohydrolase 1 from Brucella abortus (strain 2308).